The primary structure comprises 450 residues: MDADKIVFKVNNQVVSLKPEIIVDQYEYKYPAIKDLKKPCITLGKAPDLNKAYKSVLSGMNAAKLDPDDVCSYLAAAMQFFEGTCPEDWTSYGILIARKGDRITPNSLVEIKRTDVDGNWALTGGMELTRDPTVSEHASLVGLLLSLYRLSKISGQNTGNYKTNIADRIEQIFETAPFVKIVEHHTLMTTHKMCANWSTIPNFRFLAGTYDMFFSRIEHLYSAIRVGTVVTAYEDCSGLVSFTGFIKQINLTAREAILYFFHKNFEEEIRRMFEPGQETAVPHSYFIHFRSLGLSGKSPYSSNAVGHVFNLIHFVGCYMGQVRSLNATVIAACAPHEMSVLGGYLGEEFFGKGTFERRFFRDEKELQEYEAAELTKTDVALADDGTVNSDDEDYFSGETRSPEAVYTRIMMNGGRLKRSHIRRYVSVSSNHQARPNSFAEFLNKTYSNDS.

Residue S389 is modified to Phosphoserine; by host CK2.

Belongs to the lyssavirus nucleocapsid protein family. As to quaternary structure, homomultimerizes to form the nucleocapsid. Binds to viral genomic RNA. In nucleocapsid, binds protein P and thereby positions the polymerase on the template. Protein P acts as a chaperone on free protein N to prevent it from aggregation before encapsidating genomic RNA. Phosphorylated by host CK2. Unphosphorylated protein N seems to have a better affinity for leader viral promoter encapsidation. Phosphorylation of protein N in ribonucleocapsid may stabilize the interaction with protein P, thereby playing an important role in viral transcription/replication.

It is found in the virion. Its subcellular location is the host cytoplasm. In terms of biological role, encapsidates the genome in a ratio of one protein N per nine ribonucleotides, protecting it from nucleases. If expressed without protein P it binds non-specifically RNA and therefore can bind it's own mRNA. Interaction with protein P abolishes any non-specific RNA binding, and prevents phosphorylation. The soluble N-P complex encapsidates specifically the genomic RNA, with protein N protecting the genome like a pearl necklace. The encapsidated genomic RNA is termed the nucleocapsid (NC) and serves as template for viral transcription and replication. Protein N binds protein P in the NC through a different interaction, and can be phosphorylated. Subsequent viral replication is dependent on intracellular concentration of newly synthesized protein N. During replication, encapsidation by protein N is coupled to RNA synthesis and all replicative products are resistant to nucleases. This chain is Nucleoprotein (N), found in Rabies virus (strain CVS-11) (RABV).